The sequence spans 100 residues: Vesicle-associated membrane protein 8 (100 aa).

The Cytoplasmic portion of the chain corresponds to 1–74; it reads MEASGSAGND…ARKFWWKNVK (74 aa). Residues Ser-4 and Ser-17 each carry the phosphoserine modification. Residues 11 to 71 enclose the v-SNARE coiled-coil homology domain; sequence RVRNLQSEVE…QKVARKFWWK (61 aa). Phosphothreonine occurs at positions 27, 47, and 53. Ser-54 is subject to Phosphoserine. The chain crosses the membrane as a helical; Anchor for type IV membrane protein span at residues 75–95; it reads MIVIICVIVLIILILIILFAT. Residues 96–100 lie on the Vesicular side of the membrane; sequence GTIPT.

The protein belongs to the synaptobrevin family. In terms of assembly, forms a SNARE complex composed of VAMP8, SNAP29 and STX17 involved in fusion of autophagosome with lysosome. Found in a number of SNARE complexes with NAPA, SNAP23, SNAP25, STX1A, STX4, STX7, STX8 and VTI1B. Interacts with PICALM. SNARE complex formation and binding by PICALM are mutually exclusive processes for VAMP8. Interacts with SBF2/MTMR13. Interacts with RAB21 (in GTP-bound form) in response to starvation; the interaction probably regulates VAMP8 endolysosomal trafficking. Interacts with STX17; this interaction is increased in the absence of TMEM39A. Interacts with TRIM6. In terms of tissue distribution, expressed (at protein level) at a high level in kidney, lung and spleen; at a lower level in testis, liver, brain and heart. Expressed in kidney and retinal pigment epithelium derived cell line.

The protein resides in the lysosome membrane. Its subcellular location is the late endosome membrane. The protein localises to the early endosome membrane. It localises to the midbody. It is found in the cell membrane. The protein resides in the zymogen granule membrane. SNAREs, soluble N-ethylmaleimide-sensitive factor-attachment protein receptors, are essential proteins for fusion of cellular membranes. SNAREs localized on opposing membranes assemble to form a trans-SNARE complex, an extended, parallel four alpha-helical bundle that drives membrane fusion. VAMP8 is a SNARE involved in autophagy through the direct control of autophagosome membrane fusion with the lysososome membrane via its interaction with the STX17-SNAP29 binary t-SNARE complex. Also required for dense-granule secretion in platelets. Also plays a role in regulated enzyme secretion in pancreatic acinar cells. Involved in the abscission of the midbody during cell division, which leads to completely separate daughter cells. Involved in the homotypic fusion of early and late endosomes. Also participates in the activation of type I interferon antiviral response through a TRIM6-dependent mechanism. The polypeptide is Vesicle-associated membrane protein 8 (Rattus norvegicus (Rat)).